The primary structure comprises 206 residues: Cytochrome c oxidase assembly protein CtaG (206 aa).

Over 1–22 (MTEQPTNRNDVPRRGLGRDATV) the chain is Cytoplasmic. Residues 23–43 (ASICGLVVALMVGASYAAVPF) traverse the membrane as a helical; Signal-anchor for type II membrane protein segment. Over 44–206 (YNWFCRATGF…GEPDSRKGAL (163 aa)) the chain is Periplasmic.

This sequence belongs to the COX11/CtaG family.

The protein localises to the cell inner membrane. Functionally, exerts its effect at some terminal stage of cytochrome c oxidase synthesis, probably by being involved in the insertion of the copper B into subunit I. This Rhodopseudomonas palustris (strain BisB18) protein is Cytochrome c oxidase assembly protein CtaG.